The chain runs to 219 residues: Ribonuclease T (219 aa).

One can recognise an Exonuclease domain in the interval 20-194 (VVIDIETAGF…YDSLQTANLF (175 aa)). Residues Asp-23, Glu-25, His-181, and Asp-186 each contribute to the Mg(2+) site. His-181 serves as the catalytic Proton donor/acceptor.

This sequence belongs to the RNase T family. In terms of assembly, homodimer. It depends on Mg(2+) as a cofactor.

Its function is as follows. Trims short 3' overhangs of a variety of RNA species, leaving a one or two nucleotide 3' overhang. Responsible for the end-turnover of tRNA: specifically removes the terminal AMP residue from uncharged tRNA (tRNA-C-C-A). Also appears to be involved in tRNA biosynthesis. The polypeptide is Ribonuclease T (Buchnera aphidicola subsp. Schizaphis graminum (strain Sg)).